The following is a 144-amino-acid chain: Large ribosomal subunit protein uL13 (144 aa).

The protein belongs to the universal ribosomal protein uL13 family. In terms of assembly, part of the 50S ribosomal subunit.

Its function is as follows. This protein is one of the early assembly proteins of the 50S ribosomal subunit, although it is not seen to bind rRNA by itself. It is important during the early stages of 50S assembly. The chain is Large ribosomal subunit protein uL13 from Clostridium botulinum (strain Alaska E43 / Type E3).